The chain runs to 99 residues: Large ribosomal subunit protein uL23 (99 aa).

Belongs to the universal ribosomal protein uL23 family. As to quaternary structure, part of the 50S ribosomal subunit. Contacts protein L29, and trigger factor when it is bound to the ribosome.

Its function is as follows. One of the early assembly proteins it binds 23S rRNA. One of the proteins that surrounds the polypeptide exit tunnel on the outside of the ribosome. Forms the main docking site for trigger factor binding to the ribosome. The sequence is that of Large ribosomal subunit protein uL23 from Pseudomonas savastanoi pv. phaseolicola (strain 1448A / Race 6) (Pseudomonas syringae pv. phaseolicola (strain 1448A / Race 6)).